We begin with the raw amino-acid sequence, 185 residues long: MADKTGTLWYVMGPSGAGKDSLLAYARQRLPGGVMFAHRYITRPADAGGENHVALSREEFDAREAGGCFALVWRRHGLAYGLGVETELWLGQGMDVVVNGSRSSLPLAMARFPTLRPLWITASPEVLAVRLRQRARECGEVIERRLAEAASFAPPAGCEVLVNDGALAQAGDTLLRWLRGGRRVC.

13-20 (GPSGAGKD) serves as a coordination point for ATP.

Belongs to the ribose 1,5-bisphosphokinase family.

It catalyses the reaction alpha-D-ribose 1,5-bisphosphate + ATP = 5-phospho-alpha-D-ribose 1-diphosphate + ADP. Its pathway is metabolic intermediate biosynthesis; 5-phospho-alpha-D-ribose 1-diphosphate biosynthesis; 5-phospho-alpha-D-ribose 1-diphosphate from D-ribose 5-phosphate (route II): step 3/3. Catalyzes the phosphorylation of ribose 1,5-bisphosphate to 5-phospho-D-ribosyl alpha-1-diphosphate (PRPP). The chain is Ribose 1,5-bisphosphate phosphokinase PhnN from Chromobacterium violaceum (strain ATCC 12472 / DSM 30191 / JCM 1249 / CCUG 213 / NBRC 12614 / NCIMB 9131 / NCTC 9757 / MK).